Reading from the N-terminus, the 890-residue chain is DNA mismatch repair protein MutS (890 aa).

645–652 is an ATP binding site; the sequence is GPNMAGKS.

This sequence belongs to the DNA mismatch repair MutS family.

Functionally, this protein is involved in the repair of mismatches in DNA. It is possible that it carries out the mismatch recognition step. This protein has a weak ATPase activity. The polypeptide is DNA mismatch repair protein MutS (Rickettsia conorii (strain ATCC VR-613 / Malish 7)).